We begin with the raw amino-acid sequence, 365 residues long: MDKMFEQLDGLLDRYAELQELMSDPEVINETSRYMELSKEEAGLREIVGKYTRLKEVLSEVTENEELLRETTDSEMTELVKADLEELQTEKAQLEQEIKILMLPTDPNDEKNIIMEIRGAAGGDEASLFAGDLLNMYQRYAESQNWQTEIIDETATEVGGFKEVAMMITGKNVYSKLKYENGAHRVQRIPKTESQGRVHTSTATVAVMPEYDGVDVELEAKDIRVDVYRASGAGGQHINKTSSAVRMTHIPTGIVVAMQDQRSQQQNRVKAMKILQARVYDYYESQNQSEYDSSRKSAVGSGDRSERIRTYNYPQNRVTDHRIGLTLNKLDRIMNGELGDVIDALILFDQTEKLEQLQDGTAHLS.

The residue at position 236 (glutamine 236) is an N5-methylglutamine.

It belongs to the prokaryotic/mitochondrial release factor family. Methylated by PrmC. Methylation increases the termination efficiency of RF1.

The protein resides in the cytoplasm. In terms of biological role, peptide chain release factor 1 directs the termination of translation in response to the peptide chain termination codons UAG and UAA. The chain is Peptide chain release factor 1 from Latilactobacillus sakei subsp. sakei (strain 23K) (Lactobacillus sakei subsp. sakei).